The following is a 171-amino-acid chain: Shikimate kinase (171 aa).

14-19 (GAGKST) contacts ATP. Residue serine 18 coordinates Mg(2+). The substrate site is built by aspartate 36, arginine 60, and glycine 82. Arginine 120 serves as a coordination point for ATP. Arginine 139 contacts substrate. An ATP-binding site is contributed by glutamine 156.

This sequence belongs to the shikimate kinase family. In terms of assembly, monomer. It depends on Mg(2+) as a cofactor.

The protein localises to the cytoplasm. The enzyme catalyses shikimate + ATP = 3-phosphoshikimate + ADP + H(+). It participates in metabolic intermediate biosynthesis; chorismate biosynthesis; chorismate from D-erythrose 4-phosphate and phosphoenolpyruvate: step 5/7. Functionally, catalyzes the specific phosphorylation of the 3-hydroxyl group of shikimic acid using ATP as a cosubstrate. The chain is Shikimate kinase from Shewanella sediminis (strain HAW-EB3).